A 276-amino-acid chain; its full sequence is 2,3,4,5-tetrahydropyridine-2,6-dicarboxylate N-succinyltransferase (276 aa).

Substrate-binding residues include Arg104 and Asp141.

Belongs to the transferase hexapeptide repeat family. As to quaternary structure, homotrimer.

The protein localises to the cytoplasm. The catalysed reaction is (S)-2,3,4,5-tetrahydrodipicolinate + succinyl-CoA + H2O = (S)-2-succinylamino-6-oxoheptanedioate + CoA. It participates in amino-acid biosynthesis; L-lysine biosynthesis via DAP pathway; LL-2,6-diaminopimelate from (S)-tetrahydrodipicolinate (succinylase route): step 1/3. The protein is 2,3,4,5-tetrahydropyridine-2,6-dicarboxylate N-succinyltransferase of Legionella pneumophila (strain Paris).